A 308-amino-acid polypeptide reads, in one-letter code: UDP-N-acetylenolpyruvoylglucosamine reductase (308 aa).

Residues 32–196 (VGGPAARLYK…ISAKLQLSPG (165 aa)) form the FAD-binding PCMH-type domain. The active site involves R176. The active-site Proton donor is the S225. The active site involves E296.

Belongs to the MurB family. FAD serves as cofactor.

Its subcellular location is the cytoplasm. The enzyme catalyses UDP-N-acetyl-alpha-D-muramate + NADP(+) = UDP-N-acetyl-3-O-(1-carboxyvinyl)-alpha-D-glucosamine + NADPH + H(+). It participates in cell wall biogenesis; peptidoglycan biosynthesis. Its function is as follows. Cell wall formation. The chain is UDP-N-acetylenolpyruvoylglucosamine reductase from Legionella pneumophila (strain Corby).